The sequence spans 586 residues: MATCWQALWAYRSYLIVLCLPIFLLPLPLIVQTKEAYCAYSIILMALLWCTEALPLAVTALFPIILFPLMGIMEASKVCLEYFKDTNILFVGGLMVAIAVEHWNLHKRIALGVLLIIGVRPALLLLGFMLVTAFLSMWISNTATTAMMLPIGYAVLEQLQGSQKDVEEGNSNPSFELQEASPQKEETKLDNGQAVSVSSEPRAQKTKEHHRFSQGLSLCICYSASIGGIATLTGTTPNLVLQGQVNSIFPENSNVVNFASWFGFAFPTMVILLLLAWLWLQVLFLGVNFRKNFGFGEGEEERKQAAFQVIKTQHRLLGPMSFAEKAVTFLFVLLVVLWFTREPGFFPGWGDTAFANKKGQSMVSDGTVAIFISLIMFIIPSKIPGLTEDPKKPGKLKAPPAILTWKTVNDKMPWNILILLGGGFALAKGSEESGLSKWLGDKLTPLQHVPPSATVLILSLLVAIFTECTSNVATTTLFLPILASMAQAICLHPLYVMLPCTLAASLAFMLPVATPPNAIVFSFGGLKVSDMARAGFLLNIIGVLTITLSINSWSIPIFKLDTFPTWAYSNTSQCLLNPPNSTVPGH.

Transmembrane regions (helical) follow at residues 13 to 33 (SYLI…IVQT), 53 to 73 (ALPL…MGIM), and 86 to 106 (TNIL…WNLH). Polar residues predominate over residues 165-175 (DVEEGNSNPSF). The interval 165 to 209 (DVEEGNSNPSFELQEASPQKEETKLDNGQAVSVSSEPRAQKTKEH) is disordered. The next 9 membrane-spanning stretches (helical) occupy residues 215–235 (GLSL…LTGT), 264–284 (FAFP…QVLF), 319–339 (PMSF…VLWF), 366–386 (GTVA…IPGL), 407–427 (TVND…FALA), 445–465 (PLQH…VAIF), 478–498 (FLPI…YVML), 506–526 (LAFM…FGGL), and 535–555 (GFLL…SWSI).

It belongs to the SLC13A/DASS transporter (TC 2.A.47) family. NADC subfamily. Highly expressed in kidney and small intestine. Not detectable in brain, heart, stomach and skeletal muscle.

Its subcellular location is the apical cell membrane. It carries out the reaction succinate(out) + 3 Na(+)(out) = succinate(in) + 3 Na(+)(in). The catalysed reaction is fumarate(out) + 3 Na(+)(out) = fumarate(in) + 3 Na(+)(in). It catalyses the reaction 2-oxoglutarate(out) + 3 Na(+)(out) = 2-oxoglutarate(in) + 3 Na(+)(in). Li(+) decreases succinate transport in the presence of Na(+), by competing at one of the three cation binding sites. Its function is as follows. Low-affinity sodium-dicarboxylate cotransporter, that mediates the entry of citric acid cycle intermediates, such as succinate, citrate, fumarate and alpha-ketoglutarate (2-oxoglutarate) into the small intestine and renal proximal tubule. Can transport citrate in a Na(+)-dependent manner, recognizing the divalent form of citrate rather than the trivalent form which is normally found in blood. Transports the dicarboxylate into the cell with a probable stoichiometry of 3 Na(+) for 1 divalent dicarboxylate, rendering the process electrogenic. Has a critical role in renal dicarboxylate transport. The polypeptide is Solute carrier family 13 member 2 (Slc13a2) (Mus musculus (Mouse)).